A 349-amino-acid chain; its full sequence is Small ribosomal subunit protein uS2 (349 aa).

Belongs to the universal ribosomal protein uS2 family.

This chain is Small ribosomal subunit protein uS2, found in Methylobacterium nodulans (strain LMG 21967 / CNCM I-2342 / ORS 2060).